The sequence spans 997 residues: Autophagy-related protein 9 (997 aa).

Topologically, residues 1–318 are cytoplasmic; it reads MERDEYQLPN…DVYNYYLGNG (318 aa). S19 is modified (phosphoserine). Residues 29-39 are compositionally biased toward polar residues; it reads VNPSLNSQEMS. Residues 29-88 form a disordered region; it reads VNPSLNSQEMSNFPLPDIERGSSLLHSTNDSREDVDENDLRVPESDQGTSTEEEDEVDEE. A compositionally biased stretch (acidic residues) spans 79–88; sequence TEEEDEVDEE. Residues K113 and K121 each participate in a glycyl lysine isopeptide (Lys-Gly) (interchain with G-Cter in ubiquitin) cross-link. Position 122 is a phosphoserine (S122). 2 disordered regions span residues 127 to 159 and 214 to 234; these read LVEG…DGFD and HHDK…NQKH. Residue K138 forms a Glycyl lysine isopeptide (Lys-Gly) (interchain with G-Cter in ubiquitin) linkage. Phosphoserine is present on residues S143 and S144. A compositionally biased stretch (acidic residues) spans 144–159; that stretch reads SEEEEDNEFINNDGFD. Residues 221-233 show a composition bias toward polar residues; it reads ANNGPRNINGNQK. A helical membrane pass occupies residues 319-339; the sequence is FYCIILEKILNICTLLFVVFV. Residues 340-376 are Lumenal-facing; that stretch reads STYMGHCVDYSKLPTSHRVSDIIIDKCYSNSITGFTK. Residues 377-397 form a helical membrane-spanning segment; it reads FFLWMFYFFVILKIVQLYFDV. Topologically, residues 398–538 are cytoplasmic; it reads QKLSELQNFY…EELQKRFMLA (141 aa). An intramembrane segment occupies 539–559; it reads GFLNIILAPFLVTYFVLLYFF. Topologically, residues 560-620 are cytoplasmic; it reads RYFNEYKTSP…DQFPKEKTNL (61 aa). Residues 621–641 traverse the membrane as a helical segment; it reads FLKFVSFICGSFVAILAFLTV. The Lumenal portion of the chain corresponds to 642–656; it reads FDPENFLNFEITSDR. S657 carries the phosphoserine modification. Residues 657-677 traverse the membrane as a helical segment; that stretch reads SVIFYITILGAIWSVSRNTIT. Residues 678–723 are Cytoplasmic-facing; that stretch reads QEYHVFDPEETLKELYEYTHYLPKEWEGRYHKEEIKLEFCKLYNLR. Residue K701 forms a Glycyl lysine isopeptide (Lys-Gly) (interchain with G-Cter in ubiquitin) linkage. The stretch at 724 to 744 is an intramembrane region; the sequence is IVILLRELTSLMITPFVLWFS. Residues 745-997 are Cytoplasmic-facing; that stretch reads LPSSAGRIVD…EYYKKSDVGR (253 aa). Phosphoserine occurs at positions 787 and 792. Phosphothreonine is present on T794. S802 is subject to Phosphoserine. T804 carries the phosphothreonine modification. Phosphoserine is present on residues S831, S842, S864, S948, and S969.

This sequence belongs to the ATG9 family. In terms of assembly, homotrimer; forms a homotrimer with a central pore that forms a path between the two membrane leaflets. Interacts with ATG23 and ATG27 to form a cycling complex for trafficking to the PAS. Interacts (via N-terminus) with ATG11, required for recruitment of ATG9 to the PAS for the Cvt pathway during nutrient-rich conditions. Interacts (via N-terminus) with ATG17; required for recruitment to the PAS during autophagy and starved conditions. Interacts with ATG2 and ATG18; required for the retrieval of ATG9 from the PAS to the cytoplasmic pool. Interacts with ATG41. Interacts with the conserved oligomeric Golgi (COG) complex subunits COG3 and COG4. Interacts with TRS85. Phosphorylated by ATG1; phosphorylation is required for autophagy and cytoplasm to vacuole transport (Cvt) vesicle formation. Phosphorylation by ATG1 regulates ATG18 interaction and preautophagosome elongation. Phosphorylation at Ser-122 is required for selective autophagy by regulating anterograde trafficking and interaction with ATG23 and ATG27. Phosphorylation at Ser-122 prevents ubiquitination by the SCF(MET30) complex. Post-translationally, ubiquitinated by the SCF(MET30) complex in normal conditions, leading to its degradation by the proteasome, thereby preventing inappropriate induction of autophagy. Ubiquitination by the SCF(MET30) complex is prevented by phosphorylation at Ser-122.

The protein resides in the preautophagosomal structure membrane. The protein localises to the cytoplasmic vesicle membrane. It is found in the golgi apparatus membrane. It localises to the endoplasmic reticulum membrane. Its subcellular location is the mitochondrion membrane. The enzyme catalyses a 1,2-diacyl-sn-glycero-3-phosphocholine(in) = a 1,2-diacyl-sn-glycero-3-phosphocholine(out). It catalyses the reaction a 1,2-diacyl-sn-glycero-3-phospho-L-serine(in) = a 1,2-diacyl-sn-glycero-3-phospho-L-serine(out). It carries out the reaction a 1,2-diacyl-sn-glycero-3-phosphoethanolamine(in) = a 1,2-diacyl-sn-glycero-3-phosphoethanolamine(out). The catalysed reaction is a 1,2-diacyl-sn-glycero-3-phospho-(1D-myo-inositol-3-phosphate)(in) = a 1,2-diacyl-sn-glycero-3-phospho-(1D-myo-inositol-3-phosphate)(out). Functionally, phospholipid scramblase involved in autophagy and cytoplasm to vacuole transport (Cvt) vesicle formation. Cycles between the preautophagosomal structure/phagophore assembly site (PAS) and the cytoplasmic vesicle pool and supplies membrane for the growing autophagosome. Lipid scramblase activity plays a key role in preautophagosomal structure/phagophore assembly by distributing the phospholipids that arrive through ATG2 from the cytoplasmic to the luminal leaflet of the bilayer, thereby driving autophagosomal membrane expansion. Required for mitophagy. Also involved in endoplasmic reticulum-specific autophagic process and is essential for the survival of cells subjected to severe ER stress. Different machineries are required for anterograde trafficking to the PAS during either the Cvt pathway or bulk autophagy and for retrograde trafficking. Recruits vesicle-tethering proteins TRS85 and YPT1 to the autophagosome formation site. Also recruits ATG23 and ATG8 to the PAS. The protein is Autophagy-related protein 9 of Saccharomyces cerevisiae (strain YJM789) (Baker's yeast).